The following is a 20-amino-acid chain: L-amino-acid oxidase L1 (20 aa).

Belongs to the flavin monoamine oxidase family. FIG1 subfamily. As to quaternary structure, monomer. This is in contrast with most of its orthologs, that are non-covalently linked homodimers. FAD serves as cofactor. Post-translationally, N-glycosylated. Expressed by the venom gland.

It is found in the secreted. It carries out the reaction an L-alpha-amino acid + O2 + H2O = a 2-oxocarboxylate + H2O2 + NH4(+). The enzyme catalyses L-leucine + O2 + H2O = 4-methyl-2-oxopentanoate + H2O2 + NH4(+). The catalysed reaction is L-phenylalanine + O2 + H2O = 3-phenylpyruvate + H2O2 + NH4(+). It catalyses the reaction L-tryptophan + O2 + H2O = indole-3-pyruvate + H2O2 + NH4(+). It carries out the reaction L-methionine + O2 + H2O = 4-methylsulfanyl-2-oxobutanoate + H2O2 + NH4(+). The enzyme catalyses L-isoleucine + O2 + H2O = (S)-3-methyl-2-oxopentanoate + H2O2 + NH4(+). The catalysed reaction is L-tyrosine + O2 + H2O = 3-(4-hydroxyphenyl)pyruvate + H2O2 + NH4(+). Catalyzes an oxidative deamination of predominantly hydrophobic and aromatic L-amino acids, thus producing hydrogen peroxide that may contribute to the diverse toxic effects of this enzyme. Is active on L-Met, L-Ile, L-Leu, L-Phe, L-Trp, and L-Tyr. Exhibits diverse biological activities, such as hemorrhage, hemolysis, edema, apoptosis of vascular endothelial cells or tumor cell lines, antibacterial and antiparasitic activities, as well as regulation of platelet aggregation. Its effect on platelets is controversial, since it either induces aggregation or inhibits agonist-induced aggregation. These different effects are probably due to different experimental conditions. This chain is L-amino-acid oxidase L1, found in Daboia russelii (Russel's viper).